We begin with the raw amino-acid sequence, 476 residues long: Argininosuccinate lyase (476 aa).

Low complexity predominate over residues 1 to 17; sequence MTDTGSSDTNTDTTGTS. The tract at residues 1–22 is disordered; sequence MTDTGSSDTNTDTTGTSKANTM.

Belongs to the lyase 1 family. Argininosuccinate lyase subfamily.

It localises to the cytoplasm. It catalyses the reaction 2-(N(omega)-L-arginino)succinate = fumarate + L-arginine. It functions in the pathway amino-acid biosynthesis; L-arginine biosynthesis; L-arginine from L-ornithine and carbamoyl phosphate: step 3/3. This chain is Argininosuccinate lyase, found in Jannaschia sp. (strain CCS1).